A 128-amino-acid polypeptide reads, in one-letter code: MNYGTNKHYANEYGMELNEYFKHHFSYEELAGWYTMQVLKYLVRAGKKEGESYDKDRNKALDYAGELANLSNENELTEYTTDDIMGFAQDIADDFKQWKGERNNFKSEFTKEEIKAIDERYLEFIEEV.

This sequence belongs to the skunalikevirus SaV protein family.

Functionally, involved in the sensitivity of the virus to the host AbiV system. The sequence is that of SaV protein from Lactococcus lactis (Lactococcus lactis bacteriophage p2).